Consider the following 426-residue polypeptide: Adenylosuccinate synthetase (426 aa).

GTP-binding positions include 12–18 and 40–42; these read GDEGKGK and GHT. Aspartate 13 serves as the catalytic Proton acceptor. Residues aspartate 13 and glycine 40 each contribute to the Mg(2+) site. IMP is bound by residues 13-16, 38-41, threonine 130, arginine 144, glutamine 224, threonine 239, and arginine 303; these read DEGK and NAGH. Histidine 41 acts as the Proton donor in catalysis. 299 to 305 contributes to the substrate binding site; the sequence is TVTNRVR. Residues arginine 305, 331–333, and 413–415 contribute to the GTP site; these read KLD and STG.

The protein belongs to the adenylosuccinate synthetase family. Homodimer. It depends on Mg(2+) as a cofactor.

The protein localises to the cytoplasm. The catalysed reaction is IMP + L-aspartate + GTP = N(6)-(1,2-dicarboxyethyl)-AMP + GDP + phosphate + 2 H(+). It functions in the pathway purine metabolism; AMP biosynthesis via de novo pathway; AMP from IMP: step 1/2. Plays an important role in the de novo pathway of purine nucleotide biosynthesis. Catalyzes the first committed step in the biosynthesis of AMP from IMP. The protein is Adenylosuccinate synthetase of Anaplasma marginale (strain St. Maries).